The chain runs to 310 residues: Porphobilinogen deaminase (310 aa).

Residue C242 is modified to S-(dipyrrolylmethanemethyl)cysteine.

The protein belongs to the HMBS family. As to quaternary structure, monomer. Dipyrromethane is required as a cofactor.

The enzyme catalyses 4 porphobilinogen + H2O = hydroxymethylbilane + 4 NH4(+). It functions in the pathway porphyrin-containing compound metabolism; protoporphyrin-IX biosynthesis; coproporphyrinogen-III from 5-aminolevulinate: step 2/4. Functionally, tetrapolymerization of the monopyrrole PBG into the hydroxymethylbilane pre-uroporphyrinogen in several discrete steps. This chain is Porphobilinogen deaminase, found in Shewanella oneidensis (strain ATCC 700550 / JCM 31522 / CIP 106686 / LMG 19005 / NCIMB 14063 / MR-1).